The sequence spans 89 residues: Small ribosomal subunit protein bS20 (89 aa).

The span at 1 to 11 shows a compositional bias: basic and acidic residues; the sequence is MANHKSAEKRN. The interval 1-30 is disordered; that stretch reads MANHKSAEKRNRQNQVARLRNKSTRTAMKN.

Belongs to the bacterial ribosomal protein bS20 family.

Binds directly to 16S ribosomal RNA. This is Small ribosomal subunit protein bS20 from Desulfotalea psychrophila (strain LSv54 / DSM 12343).